Here is a 201-residue protein sequence, read N- to C-terminus: Inosine triphosphate pyrophosphatase (201 aa).

Residue 16 to 21 (TGNAKK) participates in ITP binding. Mg(2+) is bound at residue Glu-44. Residues Lys-56, 72-73 (DT), Lys-89, 148-151 (FGWD), Lys-171, and 176-177 (HR) contribute to the ITP site.

The protein belongs to the HAM1 NTPase family. Homodimer. The cofactor is Mg(2+). Requires Mn(2+) as cofactor.

It localises to the cytoplasm. The catalysed reaction is ITP + H2O = IMP + diphosphate + H(+). It carries out the reaction dITP + H2O = dIMP + diphosphate + H(+). It catalyses the reaction XTP + H2O = XMP + diphosphate + H(+). Its function is as follows. Pyrophosphatase that hydrolyzes non-canonical purine nucleotides such as inosine triphosphate (ITP), deoxyinosine triphosphate (dITP) or xanthosine 5'-triphosphate (XTP) to their respective monophosphate derivatives. The enzyme does not distinguish between the deoxy- and ribose forms. Probably excludes non-canonical purines from RNA and DNA precursor pools, thus preventing their incorporation into RNA and DNA and avoiding chromosomal lesions. The polypeptide is Inosine triphosphate pyrophosphatase (Zea mays (Maize)).